The sequence spans 273 residues: Proteasome subunit beta (273 aa).

The propeptide at 1–50 (MRKDGARLALPLFDPRHDPGPDFAALVSRDAARTVPTSGDGSLGAQVPHG) is removed in mature form; by autocatalysis. The active-site Nucleophile is the threonine 51.

Belongs to the peptidase T1B family. In terms of assembly, the 20S proteasome core is composed of 14 alpha and 14 beta subunits that assemble into four stacked heptameric rings, resulting in a barrel-shaped structure. The two inner rings, each composed of seven catalytic beta subunits, are sandwiched by two outer rings, each composed of seven alpha subunits. The catalytic chamber with the active sites is on the inside of the barrel. Has a gated structure, the ends of the cylinder being occluded by the N-termini of the alpha-subunits. Is capped by the proteasome-associated ATPase, ARC.

It is found in the cytoplasm. It catalyses the reaction Cleavage of peptide bonds with very broad specificity.. It participates in protein degradation; proteasomal Pup-dependent pathway. The formation of the proteasomal ATPase ARC-20S proteasome complex, likely via the docking of the C-termini of ARC into the intersubunit pockets in the alpha-rings, may trigger opening of the gate for substrate entry. Interconversion between the open-gate and close-gate conformations leads to a dynamic regulation of the 20S proteasome proteolysis activity. In terms of biological role, component of the proteasome core, a large protease complex with broad specificity involved in protein degradation. In Acidimicrobium ferrooxidans (strain DSM 10331 / JCM 15462 / NBRC 103882 / ICP), this protein is Proteasome subunit beta.